We begin with the raw amino-acid sequence, 226 residues long: Ribonuclease 3 (226 aa).

In terms of domain architecture, RNase III spans 6 to 128; sequence INRLQRKLGY…LIGGVFLDSD (123 aa). Residue glutamate 41 participates in Mg(2+) binding. Aspartate 45 is an active-site residue. Positions 114 and 117 each coordinate Mg(2+). The active site involves glutamate 117. The DRBM domain occupies 155–225; sequence DPKTRLQEYL…AEQALKQLEL (71 aa).

This sequence belongs to the ribonuclease III family. In terms of assembly, homodimer. Requires Mg(2+) as cofactor.

It is found in the cytoplasm. The enzyme catalyses Endonucleolytic cleavage to 5'-phosphomonoester.. Its function is as follows. Digests double-stranded RNA. Involved in the processing of primary rRNA transcript to yield the immediate precursors to the large and small rRNAs (23S and 16S). Processes some mRNAs, and tRNAs when they are encoded in the rRNA operon. Processes pre-crRNA and tracrRNA of type II CRISPR loci if present in the organism. The protein is Ribonuclease 3 of Yersinia pseudotuberculosis serotype O:1b (strain IP 31758).